Reading from the N-terminus, the 509-residue chain is Zinc metalloproteinase aureolysin (509 aa).

The N-terminal stretch at 1-27 (MRKFSRYAFTSMATVTLLSSLTPAALA) is a signal peptide. A propeptide spanning residues 28–208 (SDTNHKPATS…VVEKTNLVKE (181 aa)) is cleaved from the precursor. Residue Asp348 participates in Ca(2+) binding. His352 provides a ligand contact to Zn(2+). Residue Glu353 is part of the active site. His356 and Glu376 together coordinate Zn(2+). Ca(2+) contacts are provided by Asp387, Glu389, Asp390, Leu392, Glu395, Tyr398, Thr399, Lys402, and Asp405. The active-site Proton donor is His436.

This sequence belongs to the peptidase M4 family. In terms of assembly, monomer. The cofactor is Ca(2+). Requires Zn(2+) as cofactor.

The enzyme catalyses Cleavage of insulin B chain with specificity similar to that of thermolysin, preferring hydrophobic P1' residues. Activates the glutamyl endopeptidase (EC 3.4.21.19) of Staphylococcus aureus.. Functionally, plays an essential role in immune evasion by helping bacteria to resist complement-mediated killing by neutrophils. Inhibits the deposition of host C3b on bacterial surfaces and the release of the chemoattractant C5a by cleaving the central complement protein C3. The cleavage site renders the C3b molecule vulnerable to proteolytic degradation by host regulators. Cleaves and inactivates host SERPINA1, which is an endogenous protease inhibitor essential for controlling neutrophil serine protease elastase. Also plays an essential role in the cleavage and subsequent activation of the serine protease SspA (glutamyl endopeptidase) which is involved in colonization and infection of human tissues. The protein is Zinc metalloproteinase aureolysin of Staphylococcus aureus.